The sequence spans 124 residues: Protein MGF 110-8L (124 aa).

Residues 1–16 form the signal peptide; sequence MKVLILVLLGVVILQA. An N-linked (GlcNAc...) asparagine; by host glycan is attached at Asn76.

Belongs to the asfivirus MGF 110 family.

Functionally, plays a role in virus cell tropism, and may be required for efficient virus replication in macrophages. The chain is Protein MGF 110-8L from African swine fever virus (isolate Pig/Kenya/KEN-50/1950) (ASFV).